The primary structure comprises 678 residues: NADPH--cytochrome P450 reductase (678 aa).

Residues 1 to 21 lie on the Lumenal side of the membrane; sequence MADSNMDAGTTTSEMVAEEVS. A helical transmembrane segment spans residues 22-42; the sequence is LFSTTDVILFSLIVGVMTYWF. At 43–678 the chain is on the cytoplasmic side; sequence LFRKKKEEVP…KGRYSLDVWS (636 aa). S63 is subject to Phosphoserine. The region spanning 80–224 is the Flavodoxin-like domain; the sequence is IIVFYGSQTG…DFITWREQFW (145 aa). FMN-binding positions include 86–91, 138–141, 173–182, and D208; these read SQTGTA, ATYG, and LGNKTYEHFN. Positions 279-521 constitute an FAD-binding FR-type domain; the sequence is KNPFLAVVTT…YVRKSQFRLP (243 aa). R298 lines the NADP(+) pocket. Residues R424, 454 to 457, 472 to 474, Y478, and 488 to 491 contribute to the FAD site; these read RYYS, CAV, and GVAT. NADP(+) is bound by residues T535, 596–597, 602–606, and D639; these read SR and KVYVQ. FAD is bound at residue W677.

The protein belongs to the NADPH--cytochrome P450 reductase family. In the N-terminal section; belongs to the flavodoxin family. It in the C-terminal section; belongs to the flavoprotein pyridine nucleotide cytochrome reductase family. Requires FAD as cofactor. FMN serves as cofactor.

It is found in the endoplasmic reticulum membrane. It catalyses the reaction 2 oxidized [cytochrome P450] + NADPH = 2 reduced [cytochrome P450] + NADP(+) + H(+). Functionally, this enzyme is required for electron transfer from NADP to cytochrome P450 in microsomes. It can also provide electron transfer to heme oxygenase and cytochrome B5. The chain is NADPH--cytochrome P450 reductase from Bos taurus (Bovine).